Here is a 283-residue protein sequence, read N- to C-terminus: Thymidylate synthase (283 aa).

R22 serves as a coordination point for dUMP. Residue C160 is the Nucleophile of the active site. DUMP contacts are provided by residues 180 to 183, N191, and 221 to 223; these read RSCD and HIY. (6R)-5,10-methylene-5,6,7,8-tetrahydrofolate is bound at residue D183. A (6R)-5,10-methylene-5,6,7,8-tetrahydrofolate-binding site is contributed by S282.

It belongs to the thymidylate synthase family. Bacterial-type ThyA subfamily. Homodimer.

The protein resides in the cytoplasm. It catalyses the reaction dUMP + (6R)-5,10-methylene-5,6,7,8-tetrahydrofolate = 7,8-dihydrofolate + dTMP. The protein operates within pyrimidine metabolism; dTTP biosynthesis. Catalyzes the reductive methylation of 2'-deoxyuridine-5'-monophosphate (dUMP) to 2'-deoxythymidine-5'-monophosphate (dTMP) while utilizing 5,10-methylenetetrahydrofolate (mTHF) as the methyl donor and reductant in the reaction, yielding dihydrofolate (DHF) as a by-product. This enzymatic reaction provides an intracellular de novo source of dTMP, an essential precursor for DNA biosynthesis. This chain is Thymidylate synthase, found in Pasteurella multocida (strain Pm70).